A 353-amino-acid polypeptide reads, in one-letter code: Alanine racemase (353 aa).

Residue lysine 33 is the Proton acceptor; specific for D-alanine of the active site. N6-(pyridoxal phosphate)lysine is present on lysine 33. Arginine 129 contributes to the substrate binding site. The Proton acceptor; specific for L-alanine role is filled by tyrosine 250. Residue methionine 298 coordinates substrate.

The protein belongs to the alanine racemase family. Pyridoxal 5'-phosphate is required as a cofactor.

It carries out the reaction L-alanine = D-alanine. It participates in amino-acid biosynthesis; D-alanine biosynthesis; D-alanine from L-alanine: step 1/1. Catalyzes the interconversion of L-alanine and D-alanine. May also act on other amino acids. The sequence is that of Alanine racemase (alr) from Aromatoleum aromaticum (strain DSM 19018 / LMG 30748 / EbN1) (Azoarcus sp. (strain EbN1)).